We begin with the raw amino-acid sequence, 506 residues long: Chromosomal replication initiator protein DnaA (506 aa).

The segment at 1–77 (MECATTATTP…IWAEESGAKR (77 aa)) is domain I, interacts with DnaA modulators. The interval 77 to 162 (RRVDLAVRNA…AVAGDVASGS (86 aa)) is domain II. Basic and acidic residues-rich tracts occupy residues 103-112 (TERTDMHSGD) and 121-142 (SDGR…RAVE). Positions 103 to 142 (TERTDMHSGDTRQQSARISDGRSTDARGADGRGSDARAVE) are disordered. The segment at 163–384 (PLDARLTFET…GALNKLLAFN (222 aa)) is domain III, AAA+ region. Gly-210, Gly-212, Lys-213, and Thr-214 together coordinate ATP. The segment at 385-506 (QLTGEPVTLE…EVLKRLALEA (122 aa)) is domain IV, binds dsDNA.

This sequence belongs to the DnaA family. As to quaternary structure, oligomerizes as a right-handed, spiral filament on DNA at oriC.

The protein resides in the cytoplasm. Its function is as follows. Plays an essential role in the initiation and regulation of chromosomal replication. ATP-DnaA binds to the origin of replication (oriC) to initiate formation of the DNA replication initiation complex once per cell cycle. Binds the DnaA box (a 9 base pair repeat at the origin) and separates the double-stranded (ds)DNA. Forms a right-handed helical filament on oriC DNA; dsDNA binds to the exterior of the filament while single-stranded (ss)DNA is stabiized in the filament's interior. The ATP-DnaA-oriC complex binds and stabilizes one strand of the AT-rich DNA unwinding element (DUE), permitting loading of DNA polymerase. After initiation quickly degrades to an ADP-DnaA complex that is not apt for DNA replication. Binds acidic phospholipids. In Xanthobacter autotrophicus (strain ATCC BAA-1158 / Py2), this protein is Chromosomal replication initiator protein DnaA.